Reading from the N-terminus, the 390-residue chain is Putative cyclin-F2-1 (390 aa).

A disordered region spans residues 135–154; it reads YNGDDDAPAPDDSMASRPQL.

It belongs to the cyclin family. Cyclin F subfamily.

The polypeptide is Putative cyclin-F2-1 (CycF2-1) (Oryza sativa subsp. japonica (Rice)).